The chain runs to 201 residues: Large ribosomal subunit protein uL4 (201 aa).

A disordered region spans residues 45 to 66 (AQLTRSEVSGGGKKPWRQKGTG).

The protein belongs to the universal ribosomal protein uL4 family. Part of the 50S ribosomal subunit.

Its function is as follows. One of the primary rRNA binding proteins, this protein initially binds near the 5'-end of the 23S rRNA. It is important during the early stages of 50S assembly. It makes multiple contacts with different domains of the 23S rRNA in the assembled 50S subunit and ribosome. Forms part of the polypeptide exit tunnel. The polypeptide is Large ribosomal subunit protein uL4 (Aeromonas hydrophila subsp. hydrophila (strain ATCC 7966 / DSM 30187 / BCRC 13018 / CCUG 14551 / JCM 1027 / KCTC 2358 / NCIMB 9240 / NCTC 8049)).